The primary structure comprises 337 residues: Cytoskeleton protein RodZ (337 aa).

Residues 1–111 (MNTEATHDQN…LGKRRKKRDG (111 aa)) are Cytoplasmic-facing. Positions 19-71 (LRNAREQLGLSQQAVAERLCLKVSTVRDIEEDKAPADLASTFLRGYIRSYARL) constitute an HTH cro/C1-type domain. The H-T-H motif DNA-binding region spans 30 to 49 (QQAVAERLCLKVSTVRDIEE). The chain crosses the membrane as a helical; Signal-anchor for type II membrane protein span at residues 112 to 132 (WLMTFTWLVLFVVIGLSGAWW). Topologically, residues 133–337 (WQDHKAQQEE…TLNAEQSPAQ (205 aa)) are periplasmic. The span at 145–167 (TMADQSSAELSSNSEQGQSVPLN) shows a compositional bias: polar residues. The interval 145–218 (TMADQSSAEL…AVVSPSQANV (74 aa)) is disordered. A compositionally biased stretch (low complexity) spans 168-207 (TSTTTDPATTSTPPASVDTTATNTQTPAVTAPAPAVDPQQ). Residues 208–218 (NAVVSPSQANV) show a composition bias toward polar residues.

Belongs to the RodZ family.

Its subcellular location is the cell inner membrane. Functionally, cytoskeletal protein that is involved in cell-shape control through regulation of the length of the long axis. The chain is Cytoskeleton protein RodZ from Shigella dysenteriae serotype 1 (strain Sd197).